Consider the following 332-residue polypeptide: L-lactate dehydrogenase A chain (332 aa).

NAD(+)-binding positions include 29 to 57 (GMVG…MEDK) and Arg-99. Substrate is bound by residues Arg-106, Asn-138, and Arg-169. Asn-138 lines the NAD(+) pocket. The active-site Proton acceptor is His-193. Thr-248 contributes to the substrate binding site.

This sequence belongs to the LDH/MDH superfamily. LDH family. As to quaternary structure, homotetramer.

Its subcellular location is the cytoplasm. The enzyme catalyses (S)-lactate + NAD(+) = pyruvate + NADH + H(+). It functions in the pathway fermentation; pyruvate fermentation to lactate; (S)-lactate from pyruvate: step 1/1. In terms of biological role, interconverts simultaneously and stereospecifically pyruvate and lactate with concomitant interconversion of NADH and NAD(+). This Sphyraena idiastes (Pelican barracuda) protein is L-lactate dehydrogenase A chain (ldha).